The primary structure comprises 650 residues: Pentatricopeptide repeat-containing protein At2g41080 (650 aa).

12 PPR repeats span residues asparagine 43–serine 77, aspartate 78–serine 112, asparagine 114–arginine 139, lysine 140–proline 174, aspartate 175–leucine 209, aspartate 210–arginine 240, asparagine 241–proline 275, asparagine 276–serine 310, valine 311–glutamate 341, aspartate 342–glutamine 372, asparagine 378–proline 413, and glycine 414–lysine 444. The segment at isoleucine 449 to lysine 524 is type E motif. A type E(+) motif region spans residues glycine 525–lysine 555. Residues leucine 556–tryptophan 650 form a type DYW motif region.

It belongs to the PPR family. PCMP-H subfamily.

In Arabidopsis thaliana (Mouse-ear cress), this protein is Pentatricopeptide repeat-containing protein At2g41080 (PCMP-H29).